Reading from the N-terminus, the 433-residue chain is Probable mannan endo-1,4-beta-mannosidase F (433 aa).

Positions 1 to 19 are cleaved as a signal peptide; the sequence is MKRQALTLIPLLGAAAAQS. A CBM1 domain is found at 20-53; it reads GPYGQCGGNDWSGATTCVSGYVCVYQNEWYSQCV. Positions 56-82 are thr-rich linker; sequence TATSSSTTLTTTTSATTRTTTTTTSTT. Residues 83-433 are catalytic; that stretch reads SVPSSTNFPS…TEHMERIAAR (351 aa). Asn97 carries N-linked (GlcNAc...) asparagine glycosylation. Substrate contacts are provided by Trp142 and Asn255. The Proton donor role is filled by Glu256. Tyr331 is a binding site for substrate. Glu364 acts as the Nucleophile in catalysis. A substrate-binding site is contributed by Trp394.

It belongs to the glycosyl hydrolase 5 (cellulase A) family.

The protein localises to the secreted. It catalyses the reaction Random hydrolysis of (1-&gt;4)-beta-D-mannosidic linkages in mannans, galactomannans and glucomannans.. In terms of biological role, endo-1,4-mannanase, a crucial enzyme for depolymerization of seed galactomannans and wood galactoglucomannans. The chain is Probable mannan endo-1,4-beta-mannosidase F (manF) from Emericella nidulans (strain FGSC A4 / ATCC 38163 / CBS 112.46 / NRRL 194 / M139) (Aspergillus nidulans).